The chain runs to 579 residues: Ribonucleoside-diphosphate reductase small chain (579 aa).

Fe cation-binding residues include aspartate 130, glutamate 160, and histidine 163. Tyrosine 167 is an active-site residue. Fe cation-binding residues include glutamate 225, glutamate 258, and histidine 261. The 145-residue stretch at 435–579 folds into the Fido domain; sequence DMTWTLKDVH…VSVFVDQFYR (145 aa).

The protein belongs to the ribonucleoside diphosphate reductase small chain family. As to quaternary structure, heterotetramer composed of a homodimer of the large subunit (R1) and a homodimer of the small subunit (R2). Larger multisubunit protein complex are also active, composed of (R1)n(R2)n. Fe cation serves as cofactor.

It catalyses the reaction a 2'-deoxyribonucleoside 5'-diphosphate + [thioredoxin]-disulfide + H2O = a ribonucleoside 5'-diphosphate + [thioredoxin]-dithiol. In terms of biological role, ribonucleoside-diphosphate reductase holoenzyme provides the precursors necessary for viral DNA synthesis. Allows virus growth in non-dividing cells. Catalyzes the biosynthesis of deoxyribonucleotides from the corresponding ribonucleotides. This chain is Ribonucleoside-diphosphate reductase small chain, found in Magallana gigas (Pacific oyster).